Here is a 412-residue protein sequence, read N- to C-terminus: Cysteate synthase (412 aa).

An N6-(pyridoxal phosphate)lysine modification is found at lysine 105. Asparagine 131 and threonine 382 together coordinate pyridoxal 5'-phosphate.

It belongs to the threonine synthase family. Cysteate synthase subfamily. As to quaternary structure, homotrimer. Pyridoxal 5'-phosphate is required as a cofactor.

The enzyme catalyses O-phospho-L-serine + sulfite + H(+) = L-cysteate + phosphate. Its pathway is cofactor biosynthesis; coenzyme M biosynthesis. Specifically catalyzes the beta-elimination of phosphate from L-phosphoserine and the beta-addition of sulfite to the dehydroalanine intermediate to produce L-cysteate. The protein is Cysteate synthase of Methanocorpusculum labreanum (strain ATCC 43576 / DSM 4855 / Z).